Consider the following 98-residue polypeptide: NADH-ubiquinone oxidoreductase chain 4L (98 aa).

3 consecutive transmembrane segments (helical) span residues 1 to 21, 29 to 49, and 58 to 78; these read MTPV…GLAF, ALLC…LWAL, and VAPM…LALL.

The protein belongs to the complex I subunit 4L family.

Its subcellular location is the mitochondrion membrane. The enzyme catalyses a ubiquinone + NADH + 5 H(+)(in) = a ubiquinol + NAD(+) + 4 H(+)(out). Its function is as follows. Core subunit of the mitochondrial membrane respiratory chain NADH dehydrogenase (Complex I) which catalyzes electron transfer from NADH through the respiratory chain, using ubiquinone as an electron acceptor. Part of the enzyme membrane arm which is embedded in the lipid bilayer and involved in proton translocation. The chain is NADH-ubiquinone oxidoreductase chain 4L (MT-ND4L) from Oncorhynchus clarkii (Cutthroat trout).